Consider the following 484-residue polypeptide: Ribosomal RNA small subunit methyltransferase F (484 aa).

S-adenosyl-L-methionine-binding positions include 126 to 132, Glu150, Asp177, and Asp195; that span reads AAAPGSK. Catalysis depends on Cys248, which acts as the Nucleophile.

Belongs to the class I-like SAM-binding methyltransferase superfamily. RsmB/NOP family.

The protein resides in the cytoplasm. The catalysed reaction is cytidine(1407) in 16S rRNA + S-adenosyl-L-methionine = 5-methylcytidine(1407) in 16S rRNA + S-adenosyl-L-homocysteine + H(+). In terms of biological role, specifically methylates the cytosine at position 1407 (m5C1407) of 16S rRNA. The chain is Ribosomal RNA small subunit methyltransferase F from Pectobacterium atrosepticum (strain SCRI 1043 / ATCC BAA-672) (Erwinia carotovora subsp. atroseptica).